We begin with the raw amino-acid sequence, 483 residues long: ATP-dependent RNA helicase dbp-5 (483 aa).

Residues 1–47 (MADLASRITKPDEAPAAAPEAAPVSAPASEEPKAPENETSIEESQSN) form a disordered region. A compositionally biased stretch (low complexity) spans 14–29 (APAAAPEAAPVSAPAS). A Q motif motif is present at residues 74–102 (SSFDELGLPEAVNRGLLAINFKKPSKVQE). Residues 107–276 (LMLSDPPRNM…ERFAPNANQM (170 aa)) enclose the Helicase ATP-binding domain. Position 120 to 127 (120 to 127 (SQSGTGKT)) interacts with ATP. Residues 223–226 (DEAD) carry the DEAD box motif. Positions 304–455 (ILCKLYGLMT…LIQLNPNDLD (152 aa)) constitute a Helicase C-terminal domain.

The protein belongs to the DEAD box helicase family. DDX19/DBP5 subfamily. In terms of assembly, associates with the nuclear pore complex.

It is found in the cytoplasm. The protein resides in the nucleus. The protein localises to the nuclear pore complex. Its subcellular location is the nucleus membrane. The catalysed reaction is ATP + H2O = ADP + phosphate + H(+). ATP-dependent RNA helicase associated with the nuclear pore complex and essential for mRNA export from the nucleus. May participate in a terminal step of mRNA export through the removal of proteins that accompany mRNA through the nucleopore complex. May also be involved in early transcription. The sequence is that of ATP-dependent RNA helicase dbp-5 (dbp-5) from Neurospora crassa (strain ATCC 24698 / 74-OR23-1A / CBS 708.71 / DSM 1257 / FGSC 987).